Consider the following 869-residue polypeptide: DNA mismatch repair protein MutS (869 aa).

618–625 (GPNMGGKS) provides a ligand contact to ATP.

Belongs to the DNA mismatch repair MutS family.

This protein is involved in the repair of mismatches in DNA. It is possible that it carries out the mismatch recognition step. This protein has a weak ATPase activity. The sequence is that of DNA mismatch repair protein MutS from Zymomonas mobilis subsp. mobilis (strain ATCC 31821 / ZM4 / CP4).